The primary structure comprises 438 residues: GTPase Obg (438 aa).

One can recognise an Obg domain in the interval N2–L160. In terms of domain architecture, OBG-type G spans A161–D337. Residues G167–S174, F192–T196, D214–G217, T284–D287, and S318–V320 contribute to the GTP site. Residues S174 and T194 each contribute to the Mg(2+) site. Residues P360–Q438 enclose the OCT domain.

The protein belongs to the TRAFAC class OBG-HflX-like GTPase superfamily. OBG GTPase family. As to quaternary structure, monomer. Mg(2+) is required as a cofactor.

It localises to the cytoplasm. An essential GTPase which binds GTP, GDP and possibly (p)ppGpp with moderate affinity, with high nucleotide exchange rates and a fairly low GTP hydrolysis rate. Plays a role in control of the cell cycle, stress response, ribosome biogenesis and in those bacteria that undergo differentiation, in morphogenesis control. This is GTPase Obg from Limosilactobacillus reuteri (strain DSM 20016) (Lactobacillus reuteri).